A 212-amino-acid polypeptide reads, in one-letter code: Large ribosomal subunit protein uL3 (212 aa).

Residue glutamine 153 is modified to N5-methylglutamine.

The protein belongs to the universal ribosomal protein uL3 family. As to quaternary structure, part of the 50S ribosomal subunit. Forms a cluster with proteins L14 and L19. Post-translationally, methylated by PrmB.

Its function is as follows. One of the primary rRNA binding proteins, it binds directly near the 3'-end of the 23S rRNA, where it nucleates assembly of the 50S subunit. The sequence is that of Large ribosomal subunit protein uL3 from Colwellia psychrerythraea (strain 34H / ATCC BAA-681) (Vibrio psychroerythus).